The following is a 304-amino-acid chain: RING-H2 finger protein ATL2 (304 aa).

A helical membrane pass occupies residues 30 to 50 (IMLSAIVILFFVVILMVFLHL). The RING-type; atypical zinc finger occupies 119 to 161 (CAVCLSEFEESETGRVLPNCQHTFHVDCIDMWFHSHSTCPLCR). The segment at 194 to 304 (EPSSSSGLTD…DIERGGEESR (111 aa)) is disordered. The span at 227 to 244 (VPRRTFSEFEDELTRRDS) shows a compositional bias: basic and acidic residues. Polar residues predominate over residues 283 to 293 (PTLSCRIQMTE). Positions 295-304 (DIERGGEESR) are enriched in basic and acidic residues.

This sequence belongs to the RING-type zinc finger family. ATL subfamily. As to expression, preferentially expressed around the apical meristem region.

It localises to the membrane. It catalyses the reaction S-ubiquitinyl-[E2 ubiquitin-conjugating enzyme]-L-cysteine + [acceptor protein]-L-lysine = [E2 ubiquitin-conjugating enzyme]-L-cysteine + N(6)-ubiquitinyl-[acceptor protein]-L-lysine.. It participates in protein modification; protein ubiquitination. May be involved in the early steps of the plant defense signaling pathway. This chain is RING-H2 finger protein ATL2 (ATL2), found in Arabidopsis thaliana (Mouse-ear cress).